Here is a 770-residue protein sequence, read N- to C-terminus: Lysine-specific histone demethylase 1 (770 aa).

Residues M1–P21 are disordered. The SWIRM domain occupies L28–I126. V137–A165 provides a ligand contact to FAD. The disordered stretch occupies residues N718–I739.

The protein belongs to the flavin monoamine oxidase family. As to quaternary structure, probably part of a large repressor complex. Interacts with CoREST protein spr-1. Interacts with chromobox protein homolog hpl-1. FAD serves as cofactor.

The protein resides in the nucleus. It carries out the reaction N(6),N(6)-dimethyl-L-lysyl(4)-[histone H3] + 2 A + 2 H2O = L-lysyl(4)-[histone H3] + 2 formaldehyde + 2 AH2. Functionally, histone demethylase that specifically demethylates 'Lys-4' of histone H3, a specific tag for epigenetic transcriptional activation, thereby acting as a corepressor. Acts by oxidizing the substrate by FAD to generate the corresponding imine that is subsequently hydrolyzed. Demethylates both mono- and di-methylated 'Lys-4' of histone H3. May be involved in H3 demethylation in mitotic cells including gut and embryonic cells. Participates in the transcriptional repression of the presenilin protein hop-1. May act via the formation of a multiprotein complex that remodel or modify the chromatin. Together with met-2, set-17 and set-26, required for transgenerational fertility. Plays a role in developmental growth and lifespan regulation in response to ultraviolet-induced damage. The polypeptide is Lysine-specific histone demethylase 1 (Caenorhabditis elegans).